Reading from the N-terminus, the 512-residue chain is Bifunctional purine biosynthesis protein PurH (512 aa).

Residues Met1–Val150 form the MGS-like domain.

Belongs to the PurH family.

The enzyme catalyses (6R)-10-formyltetrahydrofolate + 5-amino-1-(5-phospho-beta-D-ribosyl)imidazole-4-carboxamide = 5-formamido-1-(5-phospho-D-ribosyl)imidazole-4-carboxamide + (6S)-5,6,7,8-tetrahydrofolate. It catalyses the reaction IMP + H2O = 5-formamido-1-(5-phospho-D-ribosyl)imidazole-4-carboxamide. Its pathway is purine metabolism; IMP biosynthesis via de novo pathway; 5-formamido-1-(5-phospho-D-ribosyl)imidazole-4-carboxamide from 5-amino-1-(5-phospho-D-ribosyl)imidazole-4-carboxamide (10-formyl THF route): step 1/1. The protein operates within purine metabolism; IMP biosynthesis via de novo pathway; IMP from 5-formamido-1-(5-phospho-D-ribosyl)imidazole-4-carboxamide: step 1/1. The protein is Bifunctional purine biosynthesis protein PurH of Chloroflexus aurantiacus (strain ATCC 29366 / DSM 635 / J-10-fl).